The primary structure comprises 468 residues: MASNPKSDLLNCLSGSNVIVDGDEAWPDAIKRWTGYLGKIPAAVVQVTSEEDVIAAVSYAVQNQRPFVVRGGGHSNGFSTVDSPGIIIDLSRMRKVTVDVERQVVVAQGGATMGDGVKAASSVGMAVATGTCNEVGLIGATLGGGIGRLLGHVGYAADTVLSMRVVVVDQSGVARAVEASPDVNSDLFWGLRGSGHLFGVVVEATFRAYPWTHDTWHSCLVFPPSDAGLVAEAVEKVHYQGGMQGRLVFCAPNKQPIVLLQMWYMGSHEEAASKFQPLLELPSMTDHPLNFVGRRIPYPNLNDSSDRICGYGGRKNLAAFGLKNLSAGACVAALNVYMDFIVQHPEAAQTHVLTEFYSMDVARQLDQDGQETSIPGEFRREVKYWVMPLAWYDDPALDDACAGLNKAIREAFLTQHDGTRARGVGYVNMPFEDDTTTSVFGEGERLERLRNLKLKWDPLGVVQGIVKL.

The region spanning Leu37–Trp211 is the FAD-binding PCMH-type domain.

This sequence belongs to the oxygen-dependent FAD-linked oxidoreductase family. Requires FAD as cofactor.

Its pathway is secondary metabolite biosynthesis. FAD-linked oxidoreductase; part of the gene cluster that mediates the biosynthesis of hexadehydro-astechrome (HAS), a tryptophan-derived iron(III)-complex that acts as a virulence factor in infected mice. Within the pathway, hasG converts the prenyl to a methylbutadienyl side chain. The HAS biosynthesis begins with the synthesis of a tethered Trp-Ala dipeptide by the NRPS hasD. The 7-dimethylallyltryptophan synthase hasE then catalyzes the prenylation of the hasD-tethered tryptophan or the resulting tethered Trp-Ala dipeptide at the C-7 position of the indole moiety. HAS biosynthesis continues via tethered intermediates with the succesive actions of the cytochrome P450 monooxygenase hasH, the O-methyltransferase hasC, and the FAD-linked oxidoreductase hasG. The resulting O-methylated diketopiperazine is then released from hasD. Finally, three O-methylated diketopiperazine molecules assemble in a trimeric complex with Fe(III) to produce hexadehydro-astechrome. This chain is FAD-linked oxidoreductase hasG, found in Aspergillus fumigatus (strain CBS 144.89 / FGSC A1163 / CEA10) (Neosartorya fumigata).